The chain runs to 396 residues: Elongation factor Tu (396 aa).

A tr-type G domain is found at K11–E205. The interval G20–T27 is G1. G20 to T27 lines the GTP pocket. T27 serves as a coordination point for Mg(2+). Positions G61–N65 are G2. Positions D82–G85 are G3. GTP is bound by residues D82–H86 and N137–D140. The G4 stretch occupies residues N137–D140. Positions S175–L177 are G5.

It belongs to the TRAFAC class translation factor GTPase superfamily. Classic translation factor GTPase family. EF-Tu/EF-1A subfamily. Monomer.

It is found in the cytoplasm. The enzyme catalyses GTP + H2O = GDP + phosphate + H(+). Its function is as follows. GTP hydrolase that promotes the GTP-dependent binding of aminoacyl-tRNA to the A-site of ribosomes during protein biosynthesis. In Lactobacillus helveticus (strain DPC 4571), this protein is Elongation factor Tu.